A 334-amino-acid chain; its full sequence is Beta-glucanase (334 aa).

The first 27 residues, 1–27, serve as a signal peptide directing secretion; the sequence is MKNRVISLLMASLLLVLSVIVAPFYKA. The GH16 domain occupies 28–248; the sequence is EAATVVNTPF…YVKYYPNGVP (221 aa). The active-site Nucleophile is the Glu-136. The active-site Proton donor is Glu-140. Residues 267-334 form the Dockerin domain; that stretch reads NLPLKGDVNG…RYLIRAIPSL (68 aa).

Belongs to the glycosyl hydrolase 16 family. As to quaternary structure, may form part of a multienzyme complex (cellulosome).

The enzyme catalyses Hydrolysis of (1-&gt;4)-beta-D-glucosidic linkages in beta-D-glucans containing (1-&gt;3)- and (1-&gt;4)-bonds.. This Acetivibrio thermocellus (strain ATCC 27405 / DSM 1237 / JCM 9322 / NBRC 103400 / NCIMB 10682 / NRRL B-4536 / VPI 7372) (Clostridium thermocellum) protein is Beta-glucanase (licB).